The following is a 501-amino-acid chain: Aluminum-activated malate transporter 2 (501 aa).

6 helical membrane passes run 22–42 (VVHAFKVGLALALVSSFYYYQ), 52–72 (AMWAVMTVVVVFEFSVGATLG), 78–98 (AVATLVAGGLGIGAHHLASLS), 101–121 (TVEPILLAIFVFVLAALSTFV), 130–150 (RYDYGVLIFILTFALISVSGF), and 166–186 (VIMGGVSCVLISIFVCPVWAG). Residues 398-425 (FKNKKKPSKSNSGSIGQAMPNKSHDDDD) are disordered.

It belongs to the aromatic acid exporter (TC 2.A.85) family.

It localises to the membrane. Its function is as follows. Malate transporter. This chain is Aluminum-activated malate transporter 2 (ALMT2), found in Arabidopsis thaliana (Mouse-ear cress).